Reading from the N-terminus, the 564-residue chain is Proline--tRNA ligase (564 aa).

The protein belongs to the class-II aminoacyl-tRNA synthetase family. ProS type 1 subfamily. Homodimer.

It is found in the cytoplasm. The enzyme catalyses tRNA(Pro) + L-proline + ATP = L-prolyl-tRNA(Pro) + AMP + diphosphate. Its function is as follows. Catalyzes the attachment of proline to tRNA(Pro) in a two-step reaction: proline is first activated by ATP to form Pro-AMP and then transferred to the acceptor end of tRNA(Pro). As ProRS can inadvertently accommodate and process non-cognate amino acids such as alanine and cysteine, to avoid such errors it has two additional distinct editing activities against alanine. One activity is designated as 'pretransfer' editing and involves the tRNA(Pro)-independent hydrolysis of activated Ala-AMP. The other activity is designated 'posttransfer' editing and involves deacylation of mischarged Ala-tRNA(Pro). The misacylated Cys-tRNA(Pro) is not edited by ProRS. The protein is Proline--tRNA ligase of Xylella fastidiosa (strain Temecula1 / ATCC 700964).